Consider the following 46-residue polypeptide: MTQRTLHGTCRKRRRVSGFRVRMRTRNGRAVIRARRKKGRERLAVY.

Belongs to the bacterial ribosomal protein bL34 family.

The sequence is that of Large ribosomal subunit protein bL34 from Trichodesmium erythraeum (strain IMS101).